The following is a 607-amino-acid chain: Elongation factor 4 (607 aa).

The region spanning 11–193 is the tr-type G domain; sequence ENIRNFSIIA…KIVEVVPAPD (183 aa). Residues 23–28 and 140–143 each bind GTP; these read DHGKST and NKID.

Belongs to the TRAFAC class translation factor GTPase superfamily. Classic translation factor GTPase family. LepA subfamily.

The protein resides in the cell membrane. It catalyses the reaction GTP + H2O = GDP + phosphate + H(+). Its function is as follows. Required for accurate and efficient protein synthesis under certain stress conditions. May act as a fidelity factor of the translation reaction, by catalyzing a one-codon backward translocation of tRNAs on improperly translocated ribosomes. Back-translocation proceeds from a post-translocation (POST) complex to a pre-translocation (PRE) complex, thus giving elongation factor G a second chance to translocate the tRNAs correctly. Binds to ribosomes in a GTP-dependent manner. This is Elongation factor 4 from Staphylococcus aureus (strain MW2).